A 410-amino-acid chain; its full sequence is D-3-phosphoglycerate dehydrogenase (410 aa).

NAD(+) is bound by residues 162–163, Asp-182, 239–241, and Asp-265; these read HI and AAR. The active site involves Arg-241. Residue Glu-270 is part of the active site. The active-site Proton donor is the His-293. 293-296 is an NAD(+) binding site; that stretch reads HIGG. In terms of domain architecture, ACT spans 341 to 410; the sequence is RLLHIHENRP…DGTIRARVLY (70 aa).

Belongs to the D-isomer specific 2-hydroxyacid dehydrogenase family.

It carries out the reaction (2R)-3-phosphoglycerate + NAD(+) = 3-phosphooxypyruvate + NADH + H(+). It catalyses the reaction (R)-2-hydroxyglutarate + NAD(+) = 2-oxoglutarate + NADH + H(+). Its pathway is amino-acid biosynthesis; L-serine biosynthesis; L-serine from 3-phospho-D-glycerate: step 1/3. Its activity is regulated as follows. In bacteria displays feedback inhibition by L-serine. In terms of biological role, catalyzes the reversible oxidation of 3-phospho-D-glycerate to 3-phosphonooxypyruvate, the first step of the phosphorylated L-serine biosynthesis pathway. Also catalyzes the reversible oxidation of 2-hydroxyglutarate to 2-oxoglutarate. The chain is D-3-phosphoglycerate dehydrogenase (serA) from Haemophilus influenzae (strain ATCC 51907 / DSM 11121 / KW20 / Rd).